Here is a 175-residue protein sequence, read N- to C-terminus: General odorant-binding protein 84a (175 aa).

Positions methionine 1–alanine 24 are cleaved as a signal peptide. 2 disulfides stabilise this stretch: cysteine 103-cysteine 151 and cysteine 140-cysteine 160.

Present only in a small number of hairs scattered over the surface of the funiculus.

The protein resides in the secreted. The chain is General odorant-binding protein 84a (Obp84a) from Drosophila melanogaster (Fruit fly).